The primary structure comprises 814 residues: Microbial collagenase (814 aa).

Residues 1-21 (MELKILSVAIATTLTSTGVFA) form the signal peptide. Positions 22 to 75 (LSEPVSQVTEQHAHSAHTHGVEFNRVEYQPTATLPIQPSKATRVQSLESLDESS) are excised as a propeptide. H477 contacts Zn(2+). Residue E478 is part of the active site. H481 is a binding site for Zn(2+). Residues 609-697 (APNAVITANS…VVISALGGND (89 aa)) enclose the PKD domain.

It belongs to the peptidase M9A family. It depends on Zn(2+) as a cofactor. Proteolytic cleavage might yield three different active forms.

The protein localises to the secreted. The enzyme catalyses Digestion of native collagen in the triple helical region at Xaa-|-Gly bonds. With synthetic peptides, a preference is shown for Gly at P3 and P1', Pro and Ala at P2 and P2', and hydroxyproline, Ala or Arg at P3'.. This Vibrio alginolyticus protein is Microbial collagenase.